The chain runs to 238 residues: Ribosomal RNA small subunit methyltransferase G (238 aa).

S-adenosyl-L-methionine is bound by residues glycine 77, phenylalanine 82, 128–129 (AE), and arginine 147.

This sequence belongs to the methyltransferase superfamily. RNA methyltransferase RsmG family.

It localises to the cytoplasm. Functionally, specifically methylates the N7 position of guanine in position 535 of 16S rRNA. This is Ribosomal RNA small subunit methyltransferase G from Lysinibacillus sphaericus (strain C3-41).